The sequence spans 125 residues: Cu-Zn superoxide dismutase-like protein (125 aa).

Residues Cys-52 and Cys-102 are joined by a disulfide bond.

It belongs to the Cu-Zn superoxide dismutase family.

It is found in the host cytoplasm. In terms of biological role, virion protein with no enzymatic activity. In Mus musculus (Mouse), this protein is Cu-Zn superoxide dismutase-like protein.